A 279-amino-acid polypeptide reads, in one-letter code: Putative pyruvate, phosphate dikinase regulatory protein (279 aa).

Residue glycine 153–threonine 160 participates in ADP binding.

This sequence belongs to the pyruvate, phosphate/water dikinase regulatory protein family. PDRP subfamily.

It catalyses the reaction N(tele)-phospho-L-histidyl/L-threonyl-[pyruvate, phosphate dikinase] + ADP = N(tele)-phospho-L-histidyl/O-phospho-L-threonyl-[pyruvate, phosphate dikinase] + AMP + H(+). The enzyme catalyses N(tele)-phospho-L-histidyl/O-phospho-L-threonyl-[pyruvate, phosphate dikinase] + phosphate + H(+) = N(tele)-phospho-L-histidyl/L-threonyl-[pyruvate, phosphate dikinase] + diphosphate. In terms of biological role, bifunctional serine/threonine kinase and phosphorylase involved in the regulation of the pyruvate, phosphate dikinase (PPDK) by catalyzing its phosphorylation/dephosphorylation. This Brucella melitensis biotype 2 (strain ATCC 23457) protein is Putative pyruvate, phosphate dikinase regulatory protein.